The chain runs to 207 residues: Ribosomal RNA small subunit methyltransferase G (207 aa).

Residues G76, Q81, 127–128, and R141 each bind S-adenosyl-L-methionine; that span reads VE.

This sequence belongs to the methyltransferase superfamily. RNA methyltransferase RsmG family.

The protein localises to the cytoplasm. The enzyme catalyses guanosine(527) in 16S rRNA + S-adenosyl-L-methionine = N(7)-methylguanosine(527) in 16S rRNA + S-adenosyl-L-homocysteine. Its function is as follows. Specifically methylates the N7 position of guanine in position 527 of 16S rRNA. The protein is Ribosomal RNA small subunit methyltransferase G of Neisseria meningitidis serogroup C (strain 053442).